The chain runs to 516 residues: Na(+)/H(+) antiporter NhaB (516 aa).

12 consecutive transmembrane segments (helical) span residues 23-43, 61-80, 97-117, 120-140, 144-164, 202-222, 238-258, 303-323, 348-368, 391-411, 447-467, and 475-495; these read LALI…PFVA, CYPL…IGMT, LLLI…LFVF, LLLG…AAAF, FLDA…FYGI, LMMH…VGEP, FFIR…LTCL, AVIG…VGLI, TEAL…AVII, LFYL…VGTV, ATPN…APLI, and VWMA…CVEF.

It belongs to the NhaB Na(+)/H(+) (TC 2.A.34) antiporter family.

It is found in the cell inner membrane. The catalysed reaction is 2 Na(+)(in) + 3 H(+)(out) = 2 Na(+)(out) + 3 H(+)(in). Functionally, na(+)/H(+) antiporter that extrudes sodium in exchange for external protons. The chain is Na(+)/H(+) antiporter NhaB from Klebsiella pneumoniae (strain 342).